The primary structure comprises 148 residues: Large ribosomal subunit protein bL9 (148 aa).

Belongs to the bacterial ribosomal protein bL9 family.

In terms of biological role, binds to the 23S rRNA. This is Large ribosomal subunit protein bL9 from Frankia alni (strain DSM 45986 / CECT 9034 / ACN14a).